The chain runs to 348 residues: A-type ATP synthase subunit C (348 aa).

Belongs to the V-ATPase V0D/AC39 subunit family. As to quaternary structure, has multiple subunits with at least A(3), B(3), C, D, E, F, H, I and proteolipid K(x).

The protein resides in the cell membrane. Its function is as follows. Component of the A-type ATP synthase that produces ATP from ADP in the presence of a proton gradient across the membrane. The sequence is that of A-type ATP synthase subunit C from Haloferax volcanii (strain ATCC 29605 / DSM 3757 / JCM 8879 / NBRC 14742 / NCIMB 2012 / VKM B-1768 / DS2) (Halobacterium volcanii).